The primary structure comprises 1328 residues: ATP-dependent DNA helicase hus2/rqh1 (1328 aa).

Composition is skewed to low complexity over residues 217–236 and 244–254; these read NNLPFPRLNNNNTNNNNDNN and ASPTPSSVSSQ. The disordered stretch occupies residues 217 to 254; sequence NNLPFPRLNNNNTNNNNDNNAIEKRDSASPTPSSVSSQ. The Helicase ATP-binding domain maps to 528-707; the sequence is INGTLSGKDV…INTLRMENCL (180 aa). 555–562 is a binding site for ATP; the sequence is AVIEGGAS. The DEAH box signature appears at 651 to 654; the sequence is DEAH. Residues 728–876 enclose the Helicase C-terminal domain; sequence LYTELYRFIS…ETKERQRQML (149 aa). One can recognise an HRDC domain in the interval 1115–1195; the sequence is IDVMTRCLKD…QKFIDEKEQN (81 aa). Disordered stretches follow at residues 1224 to 1247 and 1260 to 1328; these read EQGFSDDSDSVYEPSSPIEEGDEE and NSQS…QNYR. Polar residues predominate over residues 1260–1269; it reads NSQSLTQTGS. The span at 1283 to 1300 shows a compositional bias: basic residues; sequence KSYRHKRGSTSYSRKRKY.

This sequence belongs to the helicase family. RecQ subfamily. In terms of assembly, interacts with top3.

It localises to the nucleus. It catalyses the reaction Couples ATP hydrolysis with the unwinding of duplex DNA by translocating in the 3'-5' direction.. It carries out the reaction ATP + H2O = ADP + phosphate + H(+). ATP-dependent 3'-5' DNA-helicase. Has a role in the repair of UV-induced DNA damage in G2 via recombination-mediated repair. Also has a role in the repair of infrared-induced double DNA strand breaks. The chain is ATP-dependent DNA helicase hus2/rqh1 from Schizosaccharomyces pombe (strain 972 / ATCC 24843) (Fission yeast).